The chain runs to 88 residues: Small ribosomal subunit protein uS17 (88 aa).

It belongs to the universal ribosomal protein uS17 family. Part of the 30S ribosomal subunit.

One of the primary rRNA binding proteins, it binds specifically to the 5'-end of 16S ribosomal RNA. The chain is Small ribosomal subunit protein uS17 from Prochlorococcus marinus (strain MIT 9515).